The chain runs to 775 residues: Glutamine--tRNA ligase (775 aa).

Position 2 is an N-acetylalanine (Ala2). Residue Ser70 is modified to Phosphoserine. ATP contacts are provided by residues Glu271 to Asn273 and His277 to Ala283. Residue Asp303 coordinates L-glutamine. The residue at position 309 (Lys309) is an N6-acetyllysine. Tyr438 contributes to the L-glutamine binding site. Residues Thr457, Arg486–Leu487, and Val494–Lys496 contribute to the ATP site. Residue Ser495 is modified to Phosphoserine.

The protein belongs to the class-I aminoacyl-tRNA synthetase family. Monomer. Part of a multisubunit complex that groups tRNA ligases for Arg (RARS1), Asp (DARS1), Gln (QARS1), Ile (IARS1), Leu (LARS1), Lys (KARS1), Met (MARS1) the bifunctional ligase for Glu and Pro (EPRS1) and the auxiliary subunits AIMP1/p43, AIMP2/p38 and EEF1E1/p18. Interacts with RARS1. Part of a complex composed of RARS1, QARS1 and AIMP1. Detected in dorsal root ganglia (at protein level). Detected in dorsal root ganglia.

The protein localises to the cytoplasm. Its subcellular location is the cytosol. The enzyme catalyses tRNA(Gln) + L-glutamine + ATP = L-glutaminyl-tRNA(Gln) + AMP + diphosphate. Glutamine--tRNA ligase. Plays a critical role in brain development. The polypeptide is Glutamine--tRNA ligase (Qars1) (Rattus norvegicus (Rat)).